The chain runs to 780 residues: Chromatin structure-remodeling complex subunit rsc9 (780 aa).

One can recognise an ARID domain in the interval T20–H112. Position 230 is a phosphothreonine (T230). A DNA-binding region (RFX-type winged-helix) is located at residues S530–K609. A Phosphoserine modification is found at S696.

The protein belongs to the RSC9 family. In terms of assembly, component of the RSC complex composed of at least arp9, arp42, rsc1, rsc4, rsc7, rsc9, rsc58, sfh1, snf21, ssr1, ssr2, ssr3 and ssr4. The complex interacts with histone and histone variant components of centromeric chromatin.

It localises to the cytoplasm. The protein resides in the nucleus. Component of the chromatin structure remodeling complex (RSC), which is involved in transcription regulation and nucleosome positioning. Controls particularly membrane and organelle development genes. The sequence is that of Chromatin structure-remodeling complex subunit rsc9 (rsc9) from Schizosaccharomyces pombe (strain 972 / ATCC 24843) (Fission yeast).